The following is a 123-amino-acid chain: Large ribosomal subunit protein uL14c (123 aa).

Belongs to the universal ribosomal protein uL14 family. As to quaternary structure, part of the 50S ribosomal subunit.

It is found in the plastid. It localises to the chloroplast. In terms of biological role, binds to 23S rRNA. In Brachypodium distachyon (Purple false brome), this protein is Large ribosomal subunit protein uL14c.